The following is a 192-amino-acid chain: Nucleoside triphosphate pyrophosphatase (192 aa).

Catalysis depends on aspartate 73, which acts as the Proton acceptor.

Belongs to the Maf family. A divalent metal cation serves as cofactor.

Its subcellular location is the cytoplasm. The enzyme catalyses a ribonucleoside 5'-triphosphate + H2O = a ribonucleoside 5'-phosphate + diphosphate + H(+). It catalyses the reaction a 2'-deoxyribonucleoside 5'-triphosphate + H2O = a 2'-deoxyribonucleoside 5'-phosphate + diphosphate + H(+). Nucleoside triphosphate pyrophosphatase. May have a dual role in cell division arrest and in preventing the incorporation of modified nucleotides into cellular nucleic acids. The protein is Nucleoside triphosphate pyrophosphatase of Ehrlichia ruminantium (strain Welgevonden).